A 307-amino-acid chain; its full sequence is Reaction center protein M chain (307 aa).

3 consecutive transmembrane segments (helical) span residues 52–78 (LGIA…WYQA), 110–139 (QGGV…ADQL), and 142–167 (GKHM…PILM). 2 residues coordinate (7R,8Z)-bacteriochlorophyll b: H181 and H201. A helical transmembrane segment spans residues 197-225 (YNPFHGLSIAALYGSALLFAMHGATILAV). Positions 218 and 233 each coordinate Fe cation. Position 251 (W251) interacts with a ubiquinone. Residues 259–285 (ATMEGIHRWAIWMAVMVTLTGGIGILL) traverse the membrane as a helical segment. H265 contacts Fe cation.

The protein belongs to the reaction center PufL/M/PsbA/D family. Reaction center is composed of four bacteriochlorophylls, two bacteriopheophytins, two ubiquinones, one iron, and three highly hydrophobic polypeptide chains (designated L, M, and H).

It is found in the cellular chromatophore membrane. In terms of biological role, the reaction center is a membrane-bound complex that mediates the initial photochemical event in the electron transfer process of photosynthesis. This Rhodobacter capsulatus (Rhodopseudomonas capsulata) protein is Reaction center protein M chain (pufM).